The chain runs to 520 residues: MDFVSRDRISSLPNPVVSHILSFLPTKEAASTSVLSKKWRYLFAYVTNLDFDDSDYQDGKPKSDVELSRSFMEFVDRVLALQGNGSVNKFSLECSNYDVDLARVTGWILNVLGRGVSELDLSILEYPLPSEIFVSKTLVRLKLGPANDLTLTLDRKDVFLPKLKTLYIDCVDVQERGFGFVKLLSGCPVLEELVLMNIGWENWKFCSVSVKTLKRLTFFCEETYENPKSVSFDTPNLVYLEYSDAIASKYPKVNFNSLVEAHIGLRLTEDQSGDADFSEEDYFSEGDEKKQMVGNATDFLKGISTVQILYLSAQAIEVLTFCCEPIPVFNNLIQLTIENNSEIRWDSLPGLLKNCPNLETLVLKRLLHKYNKACGNVCCCKRPKQPSCLSSSPVKVLKIFLFDDNDEEDGSEMRQIKYFLEKMPRLEELVVYYNTAYDPAVLELSKKLQKIPKIASPKCKIQVISENLSLSSTVPSFLTTRWSSLPPEEAYPWVDSPPPQIIDPMLEYGSPPEDDDSWLY.

An F-box domain is found at 6 to 54; that stretch reads RDRISSLPNPVVSHILSFLPTKEAASTSVLSKKWRYLFAYVTNLDFDDS. 3 LRR repeats span residues 170-197, 219-244, and 340-365; these read CVDV…VLMN, FCEE…EYSD, and NSEI…VLKR.

The polypeptide is F-box/LRR-repeat protein At3g59200 (Arabidopsis thaliana (Mouse-ear cress)).